Reading from the N-terminus, the 294-residue chain is G-protein coupled receptor homolog U51 (294 aa).

At 1–14 (MKNIDLTNWKLLAE) the chain is on the extracellular side. Residues 15 to 35 (IYEYLFFFSFFFLCLLVIIVV) traverse the membrane as a helical segment. Over 36–47 (KFNNSTVGREYT) the chain is Cytoplasmic. A helical membrane pass occupies residues 48–68 (FSTFSGMLVYILLLPVKMGML). Over 69 to 79 (TKMWDVSTDYC) the chain is Extracellular. The chain crosses the membrane as a helical span at residues 80–102 (IILMFLSDFSFIFSSWALTLLAL). Residues 103 to 119 (ERINNFSFSEIKVNETK) lie on the Cytoplasmic side of the membrane. The helical transmembrane segment at 120 to 140 (ILKQMSFPIIWVTSIFQAVQI) threads the bilayer. Over 141 to 166 (SMKYKKSQMNLEDDYCLLAIERSAEE) the chain is Extracellular. A helical membrane pass occupies residues 167–187 (AWILLMYTVVIPTFIVFFYVL). The Cytoplasmic portion of the chain corresponds to 188-200 (NKRFLFLERDLNS). A helical membrane pass occupies residues 201–221 (IVTHLSLFLFFGALCFFPASV). Topologically, residues 222–236 (LNEFNCNRLFYGLHE) are extracellular. A helical membrane pass occupies residues 237-257 (LLIVCLELKIFYVPTMTYIIS). Topologically, residues 258–294 (CENYRLAAKAFFCKCFKPCFLMPSLRKLQQPTKSTQF) are cytoplasmic.

Belongs to the G-protein coupled receptor 1 family.

It is found in the host cell membrane. The polypeptide is G-protein coupled receptor homolog U51 (U51) (Human herpesvirus 7 (strain JI) (HHV-7)).